The sequence spans 212 residues: 3-isopropylmalate dehydratase small subunit (212 aa).

The protein belongs to the LeuD family. LeuD type 1 subfamily. Heterodimer of LeuC and LeuD.

The catalysed reaction is (2R,3S)-3-isopropylmalate = (2S)-2-isopropylmalate. It functions in the pathway amino-acid biosynthesis; L-leucine biosynthesis; L-leucine from 3-methyl-2-oxobutanoate: step 2/4. Its function is as follows. Catalyzes the isomerization between 2-isopropylmalate and 3-isopropylmalate, via the formation of 2-isopropylmaleate. The sequence is that of 3-isopropylmalate dehydratase small subunit from Laribacter hongkongensis (strain HLHK9).